The following is a 213-amino-acid chain: Large ribosomal subunit protein uL1 (213 aa).

Belongs to the universal ribosomal protein uL1 family. As to quaternary structure, part of the 50S ribosomal subunit.

Its function is as follows. Probably involved in E site tRNA release. Binds directly to 23S rRNA. In terms of biological role, protein L1 is also a translational repressor protein, it controls the translation of its operon by binding to its mRNA. This is Large ribosomal subunit protein uL1 from Methanothermococcus thermolithotrophicus (Methanococcus thermolithotrophicus).